A 200-amino-acid polypeptide reads, in one-letter code: Small ribosomal subunit protein uS4 (200 aa).

The tract at residues 22-43 is disordered; the sequence is TGKELERRPYAPGQHGPTQRKK. The S4 RNA-binding domain maps to 92 to 170; sequence QRLDNIVYRL…VPEYVTFDAE (79 aa).

The protein belongs to the universal ribosomal protein uS4 family. As to quaternary structure, part of the 30S ribosomal subunit. Contacts protein S5. The interaction surface between S4 and S5 is involved in control of translational fidelity.

One of the primary rRNA binding proteins, it binds directly to 16S rRNA where it nucleates assembly of the body of the 30S subunit. Functionally, with S5 and S12 plays an important role in translational accuracy. The polypeptide is Small ribosomal subunit protein uS4 (Listeria welshimeri serovar 6b (strain ATCC 35897 / DSM 20650 / CCUG 15529 / CIP 8149 / NCTC 11857 / SLCC 5334 / V8)).